A 67-amino-acid chain; its full sequence is Large ribosomal subunit protein bL35 (67 aa).

Over residues 1–16 (MPKMKTKSGAKKRFRV) the composition is skewed to basic residues. The disordered stretch occupies residues 1 to 25 (MPKMKTKSGAKKRFRVRPGGTVKRG).

It belongs to the bacterial ribosomal protein bL35 family.

This Polaromonas sp. (strain JS666 / ATCC BAA-500) protein is Large ribosomal subunit protein bL35.